Here is a 395-residue protein sequence, read N- to C-terminus: Formate-dependent phosphoribosylglycinamide formyltransferase (395 aa).

N(1)-(5-phospho-beta-D-ribosyl)glycinamide contacts are provided by residues 22 to 23 (EL) and Glu82. ATP is bound by residues Arg115, Lys156, 161–166 (SSGKGQ), 196–199 (EGFI), and Glu204. The region spanning 120–309 (RLAAETLGLP…EFALHARAIL (190 aa)) is the ATP-grasp domain. Residues Glu268 and Glu280 each contribute to the Mg(2+) site. N(1)-(5-phospho-beta-D-ribosyl)glycinamide contacts are provided by residues Asp287, Lys356, and 363 to 364 (RR).

Belongs to the PurK/PurT family. In terms of assembly, homodimer.

It catalyses the reaction N(1)-(5-phospho-beta-D-ribosyl)glycinamide + formate + ATP = N(2)-formyl-N(1)-(5-phospho-beta-D-ribosyl)glycinamide + ADP + phosphate + H(+). It functions in the pathway purine metabolism; IMP biosynthesis via de novo pathway; N(2)-formyl-N(1)-(5-phospho-D-ribosyl)glycinamide from N(1)-(5-phospho-D-ribosyl)glycinamide (formate route): step 1/1. Functionally, involved in the de novo purine biosynthesis. Catalyzes the transfer of formate to 5-phospho-ribosyl-glycinamide (GAR), producing 5-phospho-ribosyl-N-formylglycinamide (FGAR). Formate is provided by PurU via hydrolysis of 10-formyl-tetrahydrofolate. This chain is Formate-dependent phosphoribosylglycinamide formyltransferase, found in Stenotrophomonas maltophilia (strain R551-3).